A 255-amino-acid polypeptide reads, in one-letter code: Cell division protein DivIB (255 aa).

Residues 1 to 30 (MKNSKVIKLQDRVPKLKNQKKRNKPPVNHR) lie on the Cytoplasmic side of the membrane. Residues 31–51 (LILYISILFLLVLFLIYFRSP) form a helical membrane-spanning segment. Topologically, residues 52 to 255 (LSNIKKISVF…FKYLDDEKKK (204 aa)) are extracellular. Residues 53–121 (SNIKKISVFG…NKIDIHIEEY (69 aa)) form the POTRA domain.

It belongs to the FtsQ/DivIB family. DivIB subfamily.

The protein localises to the cell membrane. Cell division protein that may be involved in stabilizing or promoting the assembly of the division complex. The polypeptide is Cell division protein DivIB (Bacillus cytotoxicus (strain DSM 22905 / CIP 110041 / 391-98 / NVH 391-98)).